Here is a 770-residue protein sequence, read N- to C-terminus: Formate acetyltransferase (770 aa).

A PFL domain is found at 5-635; the sequence is NEMQKLAWAG…KTGNTPDGRR (631 aa). The active-site S-acetylcysteine intermediate is C419. C420 serves as the catalytic Cysteine radical intermediate. The Glycine radical domain occupies 642-770; it reads PGANPMHGRD…VITRTFTESM (129 aa). Position 745 is a glycine radical (G745).

It belongs to the glycyl radical enzyme (GRE) family. PFL subfamily. Homodimer.

It localises to the cytoplasm. It carries out the reaction formate + acetyl-CoA = pyruvate + CoA. The protein operates within fermentation; pyruvate fermentation; formate from pyruvate: step 1/1. Catalyzes the conversion of pyruvate to formate and acetyl-CoA. The chain is Formate acetyltransferase (pflB) from Haemophilus influenzae (strain ATCC 51907 / DSM 11121 / KW20 / Rd).